A 251-amino-acid polypeptide reads, in one-letter code: Probable transcriptional regulatory protein AAur_2300 (251 aa).

Belongs to the TACO1 family.

The protein localises to the cytoplasm. This Paenarthrobacter aurescens (strain TC1) protein is Probable transcriptional regulatory protein AAur_2300.